The following is a 554-amino-acid chain: U4/U6 small nuclear ribonucleoprotein PRP4-like protein (554 aa).

Pro residues predominate over residues 48 to 65; that stretch reads APIPMMPHPPVARPPTFR. Residues 48-99 form a disordered region; sequence APIPMMPHPPVARPPTFRPPVSQNGGVKTSDSDSESDDEHIEISEESKQVRE. Positions 88 to 99 are enriched in basic and acidic residues; it reads IEISEESKQVRE. 7 WD repeats span residues 253 to 292, 296 to 335, 337 to 376, 379 to 418, 421 to 460, 463 to 503, and 506 to 545; these read GDDR…NTIA, DHKE…LQTF, GHLD…ELLL, GHSR…SILV, GHIK…SLYI, AHAN…LVKS, and GHES…DEDE.

The protein resides in the nucleus speckle. Its function is as follows. Participates in pre-mRNA splicing. Part of the U4/U5/U6 tri-snRNP complex, one of the building blocks of the spliceosome. Essential for reproduction. In female gametophyte, is necessary for the egg cell and central cell fate determination and hence reproductive success. Involved in a mechanism that prevents accessory cells from adopting gametic cell fate. Modulates egg cell signaling center that regulates the development of all female gametophytic cells. The protein is U4/U6 small nuclear ribonucleoprotein PRP4-like protein of Arabidopsis thaliana (Mouse-ear cress).